The primary structure comprises 216 residues: LexA repressor (216 aa).

The segment at residues 28 to 48 is a DNA-binding region (H-T-H motif); that stretch reads RAEIAAEFGFSSPNAAEEHLR. Active-site for autocatalytic cleavage activity residues include S134 and K171.

This sequence belongs to the peptidase S24 family. In terms of assembly, homodimer.

It catalyses the reaction Hydrolysis of Ala-|-Gly bond in repressor LexA.. Represses a number of genes involved in the response to DNA damage (SOS response), including recA and lexA. In the presence of single-stranded DNA, RecA interacts with LexA causing an autocatalytic cleavage which disrupts the DNA-binding part of LexA, leading to derepression of the SOS regulon and eventually DNA repair. This is LexA repressor from Ralstonia nicotianae (strain ATCC BAA-1114 / GMI1000) (Ralstonia solanacearum).